The chain runs to 275 residues: Probable ABC transporter permease protein NosY (275 aa).

The next 6 membrane-spanning stretches (helical) occupy residues 20 to 40 (WLLA…WFGA), 60 to 80 (SLAT…AIVG), 111 to 131 (ILAL…LALV), 146 to 166 (FMGS…ALSS), 179 to 199 (LGLW…ILVL), and 250 to 270 (ALWL…HGLF).

As to quaternary structure, the complex may be composed of an ATP-binding protein (NosF), a transmembrane protein (NosY) and a solute-binding protein (NosD).

It is found in the cell inner membrane. Required for the assembly of the copper chromophores of nitrous oxide reductase. Could be part of the ABC transporter complex NosDFY. The protein is Probable ABC transporter permease protein NosY (nosY) of Pseudomonas aeruginosa (strain ATCC 15692 / DSM 22644 / CIP 104116 / JCM 14847 / LMG 12228 / 1C / PRS 101 / PAO1).